The sequence spans 461 residues: MASTPRTPAPVRSPPPVPTPTHPTPPPPPLETPQPPLPVSTPPPALETPPPRRVRTPPPPLETPPPPSPSSSQPGDEYHTPAPSLADGSPREEEASFPSDGREGGGAPAPPKSPQLSPMRLAAPRLLLPPPSPRTPTGQNGQEEQEGGAKAAAAGAGTGTGTAAPARQQLRLTGLARSPSSQRSLATTNSSPSPSPSPTPPSPLTPAAAPVVNNNSNNKNNRSGQSTPKRAAETKLPLSSPAATATIAVQHFNPVEEAVTSPLHLGIGKAQRLDHHQHQHQQRQEQHAAAAAVENGGSVPPDVAAAVAVGERRELSVTLRLATAVLSLAAFSVIASARTSGWAGDYYAHHLQYRYAVAVNVIVCAYSIAQSFGEIRRLISPRFIFRSMSSYYCSLFLDQALAYLLMSASSAAASRNDLWVSRFGTDAFNRKITSALWLSFIAFLMLALNALISTANLFSML.

Residues 1–239 (MASTPRTPAP…RAAETKLPLS (239 aa)) are disordered. The Cytoplasmic portion of the chain corresponds to 1–314 (MASTPRTPAP…AAVAVGERRE (314 aa)). Over residues 7–69 (TPAPVRSPPP…PLETPPPPSP (63 aa)) the composition is skewed to pro residues. Composition is skewed to low complexity over residues 116-126 (LSPMRLAAPRL) and 135-155 (TPTGQNGQEEQEGGAKAAAAG). The segment covering 193 to 204 (SPSPSPTPPSPL) has biased composition (pro residues). A compositionally biased stretch (low complexity) spans 205–221 (TPAAAPVVNNNSNNKNN). A helical transmembrane segment spans residues 315–335 (LSVTLRLATAVLSLAAFSVIA). Residues 336-354 (SARTSGWAGDYYAHHLQYR) lie on the Extracellular side of the membrane. The helical transmembrane segment at 355–375 (YAVAVNVIVCAYSIAQSFGEI) threads the bilayer. Residues 376–392 (RRLISPRFIFRSMSSYY) lie on the Cytoplasmic side of the membrane. A helical membrane pass occupies residues 393 to 413 (CSLFLDQALAYLLMSASSAAA). The Extracellular portion of the chain corresponds to 414-431 (SRNDLWVSRFGTDAFNRK). A helical membrane pass occupies residues 432-452 (ITSALWLSFIAFLMLALNALI). Residues 453–461 (STANLFSML) lie on the Cytoplasmic side of the membrane.

Belongs to the Casparian strip membrane proteins (CASP) family. In terms of assembly, homodimer and heterodimers.

The protein localises to the cell membrane. In Sorghum bicolor (Sorghum), this protein is CASP-like protein 4U1.